A 393-amino-acid chain; its full sequence is Synaptic vesicle membrane protein VAT-1 homolog (393 aa).

Residues 1–40 (MSDEREVAEAATGEDASSPPPKTEAASDPQHPAASEGAAA) form a disordered region. Residue Ser-2 is modified to N-acetylserine. Residues Ser-2, Ser-18, Ser-27, Ser-35, and Ser-44 each carry the phosphoserine modification.

It belongs to the zinc-containing alcohol dehydrogenase family. Quinone oxidoreductase subfamily. As to expression, expressed in brain. Also expressed in glioblastoma cells.

It localises to the cytoplasm. The protein resides in the mitochondrion outer membrane. Possesses ATPase activity. Plays a part in calcium-regulated keratinocyte activation in epidermal repair mechanisms. Has no effect on cell proliferation. Negatively regulates mitochondrial fusion in cooperation with mitofusin proteins (MFN1-2). In Homo sapiens (Human), this protein is Synaptic vesicle membrane protein VAT-1 homolog (VAT1).